A 332-amino-acid polypeptide reads, in one-letter code: L-lactate dehydrogenase A chain (332 aa).

An N-acetylalanine modification is found at A2. K5 bears the N6-acetyllysine; alternate mark. Residue K5 is modified to N6-succinyllysine; alternate. K14 carries the post-translational modification N6-acetyllysine. T18 bears the Phosphothreonine mark. 29 to 57 (GAVGMACAISILMKDLADELALVDVIEDK) contributes to the NAD(+) binding site. K57 carries the post-translational modification N6-acetyllysine; alternate. A Glycyl lysine isopeptide (Lys-Gly) (interchain with G-Cter in SUMO2); alternate cross-link involves residue K57. The residue at position 81 (K81) is an N6-acetyllysine. R99 contacts NAD(+). R106 lines the substrate pocket. Residue K118 is modified to N6-acetyllysine; alternate. K118 carries the N6-succinyllysine; alternate modification. K126 is modified (N6-acetyllysine). Positions 138 and 169 each coordinate substrate. The active-site Proton acceptor is the H193. An N6-acetyllysine mark is found at K224 and K232. At Y239 the chain carries Phosphotyrosine. N6-acetyllysine is present on K243. A substrate-binding site is contributed by T248. Position 309 is a phosphothreonine (T309). The residue at position 310 (S310) is a Phosphoserine. K318 is modified (N6-acetyllysine; alternate). The residue at position 318 (K318) is an N6-succinyllysine; alternate. T322 is modified (phosphothreonine).

It belongs to the LDH/MDH superfamily. LDH family. Homotetramer. Interacts with PTEN upstream reading frame protein MP31. Post-translationally, ISGylated.

It is found in the cytoplasm. The catalysed reaction is (S)-lactate + NAD(+) = pyruvate + NADH + H(+). The protein operates within fermentation; pyruvate fermentation to lactate; (S)-lactate from pyruvate: step 1/1. Interconverts simultaneously and stereospecifically pyruvate and lactate with concomitant interconversion of NADH and NAD(+). This is L-lactate dehydrogenase A chain (LDHA) from Pan troglodytes (Chimpanzee).